Here is a 264-residue protein sequence, read N- to C-terminus: S-adenosylmethionine decarboxylase proenzyme (264 aa).

Residue S113 is the Schiff-base intermediate with substrate; via pyruvic acid of the active site. S113 is modified (pyruvic acid (Ser); by autocatalysis). The Proton acceptor; for processing activity role is filled by H118. The active-site Proton donor; for catalytic activity is the C141.

This sequence belongs to the prokaryotic AdoMetDC family. Type 2 subfamily. In terms of assembly, heterooctamer of four alpha and four beta chains arranged as a tetramer of alpha/beta heterodimers. Requires pyruvate as cofactor. In terms of processing, is synthesized initially as an inactive proenzyme. Formation of the active enzyme involves a self-maturation process in which the active site pyruvoyl group is generated from an internal serine residue via an autocatalytic post-translational modification. Two non-identical subunits are generated from the proenzyme in this reaction, and the pyruvate is formed at the N-terminus of the alpha chain, which is derived from the carboxyl end of the proenzyme. The post-translation cleavage follows an unusual pathway, termed non-hydrolytic serinolysis, in which the side chain hydroxyl group of the serine supplies its oxygen atom to form the C-terminus of the beta chain, while the remainder of the serine residue undergoes an oxidative deamination to produce ammonia and the pyruvoyl group blocking the N-terminus of the alpha chain.

It carries out the reaction S-adenosyl-L-methionine + H(+) = S-adenosyl 3-(methylsulfanyl)propylamine + CO2. The protein operates within amine and polyamine biosynthesis; S-adenosylmethioninamine biosynthesis; S-adenosylmethioninamine from S-adenosyl-L-methionine: step 1/1. In terms of biological role, catalyzes the decarboxylation of S-adenosylmethionine to S-adenosylmethioninamine (dcAdoMet), the propylamine donor required for the synthesis of the polyamines spermine and spermidine from the diamine putrescine. The polypeptide is S-adenosylmethionine decarboxylase proenzyme (Pseudomonas syringae pv. syringae (strain B728a)).